Reading from the N-terminus, the 188-residue chain is ATP synthase subunit b 2 (188 aa).

A helical membrane pass occupies residues 41 to 61 (FFWLVISFGFFYFFIARVIVP).

Belongs to the ATPase B chain family. As to quaternary structure, F-type ATPases have 2 components, F(1) - the catalytic core - and F(0) - the membrane proton channel. F(1) has five subunits: alpha(3), beta(3), gamma(1), delta(1), epsilon(1). F(0) has three main subunits: a(1), b(2) and c(10-14). The alpha and beta chains form an alternating ring which encloses part of the gamma chain. F(1) is attached to F(0) by a central stalk formed by the gamma and epsilon chains, while a peripheral stalk is formed by the delta and b chains.

It localises to the cell inner membrane. Its function is as follows. F(1)F(0) ATP synthase produces ATP from ADP in the presence of a proton or sodium gradient. F-type ATPases consist of two structural domains, F(1) containing the extramembraneous catalytic core and F(0) containing the membrane proton channel, linked together by a central stalk and a peripheral stalk. During catalysis, ATP synthesis in the catalytic domain of F(1) is coupled via a rotary mechanism of the central stalk subunits to proton translocation. In terms of biological role, component of the F(0) channel, it forms part of the peripheral stalk, linking F(1) to F(0). The b'-subunit is a diverged and duplicated form of b found in plants and photosynthetic bacteria. The sequence is that of ATP synthase subunit b 2 (atpF2) from Bartonella bacilliformis (strain ATCC 35685 / KC583 / Herrer 020/F12,63).